The chain runs to 394 residues: RAB6A-GEF complex partner protein 2 (394 aa).

Belongs to the RGP1 family. Forms a complex with RIC1; the interaction enhances RAB6A GTPase activity. Interacts with RIC1. Interacts with RAB6A; the interaction is direct with a preference for RAB6A-GDP. Interacts with RAB33B.

It localises to the cytoplasm. The protein localises to the cytosol. The protein resides in the membrane. In terms of biological role, the RIC1-RGP1 complex acts as a guanine nucleotide exchange factor (GEF), which activates RAB6A by exchanging bound GDP for free GTP and may thereby required for efficient fusion of endosome-derived vesicles with the Golgi compartment. The RIC1-RGP1 complex participates in the recycling of mannose-6-phosphate receptors. The chain is RAB6A-GEF complex partner protein 2 from Bos taurus (Bovine).